Here is a 355-residue protein sequence, read N- to C-terminus: Uroporphyrinogen decarboxylase (355 aa).

Substrate-binding positions include 27–31, Asp77, Tyr154, Thr209, and His328; that span reads RQAGR.

This sequence belongs to the uroporphyrinogen decarboxylase family. As to quaternary structure, homodimer.

Its subcellular location is the cytoplasm. It carries out the reaction uroporphyrinogen III + 4 H(+) = coproporphyrinogen III + 4 CO2. It functions in the pathway porphyrin-containing compound metabolism; protoporphyrin-IX biosynthesis; coproporphyrinogen-III from 5-aminolevulinate: step 4/4. Its function is as follows. Catalyzes the decarboxylation of four acetate groups of uroporphyrinogen-III to yield coproporphyrinogen-III. This chain is Uroporphyrinogen decarboxylase, found in Vibrio campbellii (strain ATCC BAA-1116).